A 191-amino-acid chain; its full sequence is Peptidyl-tRNA hydrolase (191 aa).

Y15 contributes to the tRNA binding site. H20 (proton acceptor) is an active-site residue. Residues F66, N68, and N114 each contribute to the tRNA site.

Belongs to the PTH family. As to quaternary structure, monomer.

The protein resides in the cytoplasm. The enzyme catalyses an N-acyl-L-alpha-aminoacyl-tRNA + H2O = an N-acyl-L-amino acid + a tRNA + H(+). Hydrolyzes ribosome-free peptidyl-tRNAs (with 1 or more amino acids incorporated), which drop off the ribosome during protein synthesis, or as a result of ribosome stalling. Its function is as follows. Catalyzes the release of premature peptidyl moieties from peptidyl-tRNA molecules trapped in stalled 50S ribosomal subunits, and thus maintains levels of free tRNAs and 50S ribosomes. The sequence is that of Peptidyl-tRNA hydrolase from Streptococcus agalactiae serotype Ia (strain ATCC 27591 / A909 / CDC SS700).